We begin with the raw amino-acid sequence, 179 residues long: MARLKEVYRKEIAPKLKEELQLKNVMEVPRITKITLNMGIGEAIGDKKIIDNAVADLEKITGQKVVVTHARKSIAGFKVREGWPIGVKVTLRSDRMYEFLDRLLSISLPRVRDFRGLNAKSFDGRGNYSMGVKEQIIFPEIDYDKIDALRGLDITLTTTARTDDEGRALLRAFNFPFRN.

It belongs to the universal ribosomal protein uL5 family. As to quaternary structure, part of the 50S ribosomal subunit; part of the 5S rRNA/L5/L18/L25 subcomplex. Contacts the 5S rRNA and the P site tRNA. Forms a bridge to the 30S subunit in the 70S ribosome.

In terms of biological role, this is one of the proteins that bind and probably mediate the attachment of the 5S RNA into the large ribosomal subunit, where it forms part of the central protuberance. In the 70S ribosome it contacts protein S13 of the 30S subunit (bridge B1b), connecting the 2 subunits; this bridge is implicated in subunit movement. Contacts the P site tRNA; the 5S rRNA and some of its associated proteins might help stabilize positioning of ribosome-bound tRNAs. The polypeptide is Large ribosomal subunit protein uL5 (Stutzerimonas stutzeri (strain A1501) (Pseudomonas stutzeri)).